We begin with the raw amino-acid sequence, 119 residues long: Large ribosomal subunit protein bL20 (119 aa).

The protein belongs to the bacterial ribosomal protein bL20 family.

In terms of biological role, binds directly to 23S ribosomal RNA and is necessary for the in vitro assembly process of the 50S ribosomal subunit. It is not involved in the protein synthesizing functions of that subunit. The polypeptide is Large ribosomal subunit protein bL20 (Clostridium botulinum (strain ATCC 19397 / Type A)).